A 341-amino-acid polypeptide reads, in one-letter code: Heat-shock protein cognate (HSC) co-chaperone sgt12 (341 aa).

The tract at residues 86–123 (PSKEPASAGAQAQSTEAQQPKAGAPTPESDKLKSEGNA) is disordered. 3 TPR repeats span residues 114 to 147 (SDKL…APAN), 148 to 181 (PIYL…DPKY), and 182 to 215 (SKAW…EGNG). Residues 232-280 (EEANRGAEPPADDVDDAAGASRGAGGMPDLSSLASMLGGRGGGGGGMPD) are disordered. Over residues 269-278 (GGRGGGGGGM) the composition is skewed to gly residues.

Belongs to the SGT family. Forms homodimers. Component of the get4/get5/sgt2 sorting complex. Dimers of sgt2 bind directly a single get5. Binds HSC family members ssa1, sse1, hsp104 and hsc82 via its TPR domain.

The protein resides in the cytoplasm. Functionally, heat-shock protein cognate (HSC) co-chaperone that preferentially binds endoplasmic reticulum-destined tail-anchored (TA) proteins and directs them to the GET (guided entry of TA proteins) pathway via get4 and get5. Get4 and get5 form an obligate complex that catalyzes the transfer of tail-anchored proteins destined to the endoplasmic reticulum from sgt2 to the cytosolic targeting factor which then targets the TA protein to the ER membrane via get1/get2. This Aspergillus fumigatus (strain ATCC MYA-4609 / CBS 101355 / FGSC A1100 / Af293) (Neosartorya fumigata) protein is Heat-shock protein cognate (HSC) co-chaperone sgt12.